The primary structure comprises 865 residues: MAVARVDAALPPGEGSVVNWSGQGLQKLGPNLPCEADIHTLILDKNQIIKLENLEKCKRLIQLSVANNRLVRMMGVAKLTLLRVLNLPHNSIGCVEGLKELVHLEWLNLAGNNLKAMEQINSCTALQHLDLSDNNISQIGDLSKLVSLKTLLLHGNIITSLRMAPAYLPRSLAILSLAENEIRDLNEISFLASLTELEQLSIMNNPCVMATPSIPGFDYRPYIVSWCLNLRVLDGYVISQKESLKAEWLYSQGKGRAYRPGQHIQLVQYLATVCPLTSTLGLQTAEDAKLEKILSKQRFHQRQLMNQSQNEELSPLVPVETRASLIPEHSSPVQDCQISQESEPVIQVNSWVGINSNDDQLFAVKNNFPASVHTTRYSRNDLHLEDIQTDEDKLNCSLLSSESTFMPVASGLSPLSPTVELRLQGINLGLEDDGVADESVKGLESQVLDKEEEQPLWAANENSVQMMRSEINTEVNEKAGLLPCPEPTIISAILKDDNHSLTFFPESTEQKQSDIKKPENTQPENKETISQATSEKLPMILTQRSVALGQDKVALQKLNDAATKLQACWRGFYARNYNPQAKDVRYEIRLRRMQEHIVCLTDEIRRLRKERDEERIKKFVQEEAFRFLWNQVRSLQVWQQTVDQRLSSWHTDVPPISSTLVPSKHPLFTQSQESSCDQNADWFIASDVAPQEKSLPEFPDSGFHSSLTEQVHSLQHSLDFEKSSTEGSESSIMGNSIDTVRYGKESDLGDVSEEHGEWNKESSNNEQDNSLLEQYLTSVQQLEDADERTNFDTETRDSKLHIACFPVQLDTLSDGASVDESHGISPPLQGEISQTQENSKLNAEVQGQQPECDSTFQLLHVGVTV.

LRR repeat units lie at residues Asp-37–Lys-58, Arg-59–Thr-80, Leu-81–Val-102, His-103–Thr-124, Ala-125–Val-146, Ser-147–Leu-168, Ser-171–Ala-192, and Glu-196–Asn-205. The 39-residue stretch at Thr-211–Leu-249 folds into the LRRCT domain. The tract at residues His-300–Asp-750 is CCP110-binding. Residues Ser-308, Ser-413, and Ser-500 each carry the phosphoserine modification. The segment at Glu-506 to Ile-529 is disordered. The span at Thr-508 to Glu-527 shows a compositional bias: basic and acidic residues. Ser-530 is modified (phosphoserine). Thr-542 carries the phosphothreonine modification. The IQ domain maps to Leu-558–Glu-587. An interaction with MPHOSPH9 region spans residues Glu-587–Val-865. A disordered region spans residues Gln-715–Asn-769. Residues Thr-725–Asp-738 are compositionally biased toward polar residues. The segment covering Arg-741 to Lys-760 has biased composition (basic and acidic residues). Ser-763 bears the Phosphoserine mark.

Interacts with CALM1, CEP76, KIF24 and TALPID3. Interacts with CCP110. ENKD1 competes with CEP97 for binding to CCP110, destabilizing the interaction between CP110 and CEP97 which promotes the removal of CCP110 and CEP97 from the mother centriole and allows the initiation of ciliogenesis. Via its interaction with CCP110, may indirectly interact with HERC2 and NEURL4. Interacts with MPHOSPH9.

Its subcellular location is the cytoplasm. The protein resides in the cytoskeleton. It localises to the microtubule organizing center. It is found in the centrosome. The protein localises to the centriole. Its function is as follows. Acts as a key negative regulator of ciliogenesis in collaboration with CCP110 by capping the mother centriole thereby preventing cilia formation. Required for recruitment of CCP110 to the centrosome. The sequence is that of Centrosomal protein of 97 kDa (CEP97) from Homo sapiens (Human).